Reading from the N-terminus, the 810-residue chain is Zinc finger CCCH domain-containing protein 11A (810 aa).

3 C3H1-type zinc fingers span residues 2–29 (PNQG…HCEA), 31–57 (IGNE…HMEI), and 60–86 (KRSE…HHNR). Phosphoserine is present on serine 108. Residues lysine 114 and lysine 124 each participate in a glycyl lysine isopeptide (Lys-Gly) (interchain with G-Cter in SUMO2) cross-link. Serine 132 is subject to Phosphoserine. Disordered stretches follow at residues 139–194 (MKVE…GLRV), 223–258 (KKMK…ENVR), 285–351 (GKRK…DKVN), and 367–432 (ERAS…TTCI). Lysine 140 participates in a covalent cross-link: Glycyl lysine isopeptide (Lys-Gly) (interchain with G-Cter in SUMO2). 2 positions are modified to phosphoserine: serine 149 and serine 171. Over residues 160–175 (ADDDEDDDDQFSEEGD) the composition is skewed to acidic residues. Serine 290 is modified (phosphoserine). 2 stretches are compositionally biased toward basic and acidic residues: residues 309 to 322 (KKVE…DKTP) and 367 to 390 (ERAS…KTDD). Residue threonine 321 is modified to Phosphothreonine. The stretch at 362–423 (EEILLERASQ…KHRQQEAERQ (62 aa)) forms a coiled coil. Position 370 is a phosphoserine (serine 370). The segment covering 391-402 (STSGARSSSTIR) has biased composition (polar residues). Residues 417 to 432 (QQEAERQKSKKDTTCI) show a composition bias toward basic and acidic residues. Residue lysine 478 forms a Glycyl lysine isopeptide (Lys-Gly) (interchain with G-Cter in SUMO2) linkage. The interval 482–549 (ALRVQQSSES…KEASGETTGV (68 aa)) is disordered. Over residues 486-498 (QQSSESSTSSPSQ) the composition is skewed to low complexity. Residue lysine 619 forms a Glycyl lysine isopeptide (Lys-Gly) (interchain with G-Cter in SUMO2) linkage. The disordered stretch occupies residues 715-768 (TVPEAENPRDSLVLPPTQSSSDSSPPEVSGPSSSQMSMKTRRLSSASTGKPPLS). Residues 729 to 748 (PPTQSSSDSSPPEVSGPSSS) are compositionally biased toward low complexity. Residues 749 to 762 (QMSMKTRRLSSAST) show a composition bias toward polar residues.

In terms of assembly, interacts with TREX complex components THOC2, DDX39 and POLDIP3; the interactions are ATP-dependent. Interacts with PABPN1; this interaction retains ZC3H11A in nuclear speckles. Interacts with KPNA3.

It is found in the nucleus. It localises to the nucleus speckle. Through its association with TREX complex components, may participate in the export and post-transcriptional coordination of selected mRNA transcripts, including those required to maintain the metabolic processes in embryonic cells. Binds RNA. In terms of biological role, (Microbial infection) Plays a role in efficient growth of several nuclear-replicating viruses such as HIV-1, influenza virus or herpes simplex virus 1/HHV-1. Required for efficient viral mRNA export. May be required for proper polyadenylation of adenovirus type 5/HAdV-5 capsid mRNA. In Homo sapiens (Human), this protein is Zinc finger CCCH domain-containing protein 11A (ZC3H11A).